Reading from the N-terminus, the 241-residue chain is Small ribosomal subunit protein uS2 (241 aa).

It belongs to the universal ribosomal protein uS2 family.

The sequence is that of Small ribosomal subunit protein uS2 from Klebsiella pneumoniae (strain 342).